The sequence spans 2255 residues: Defense against restriction protein B (2255 aa).

The Helicase ATP-binding domain occupies 841–1126; it reads VRRLSEDGRG…YNMLSHVLPK (286 aa). Residue 854–861 coordinates ATP; it reads FGTGLGKT. Residues 1052–1055 carry the DEAH box motif; it reads DEGH. A coiled-coil region spans residues 1198–1234; that stretch reads ELDEHQQDAPLTEEQLAAYEELRQQAEAAAKANNGVT. The Helicase C-terminal domain occupies 1383–1568; sequence KLKRIICNAL…EMENADANDM (186 aa). Residues 1617-1654 adopt a coiled-coil conformation; sequence HAAGEDVEVLTAELERSKAELEKTTAEVAKFKQAVMAK.

It belongs to the helicase family.

Its subcellular location is the virion. Capsid internal protein that is probably ejected along with the viral DNA and prevents degradation of viral DNA by the host EcoB and EcoK restriction-modification antiviral defense systems. This Escherichia phage P1 (Bacteriophage P1) protein is Defense against restriction protein B.